We begin with the raw amino-acid sequence, 343 residues long: Heat-inducible transcription repressor HrcA (343 aa).

Belongs to the HrcA family.

Functionally, negative regulator of class I heat shock genes (grpE-dnaK-dnaJ and groELS operons). Prevents heat-shock induction of these operons. The chain is Heat-inducible transcription repressor HrcA from Alkaliphilus metalliredigens (strain QYMF).